The following is a 226-amino-acid chain: Ribonuclease 3 (226 aa).

One can recognise an RNase III domain in the interval 7-129; it reads LPRLCRTLGY…IIGAVYLDAD (123 aa). Glu42 is a Mg(2+) binding site. Asp46 is an active-site residue. 2 residues coordinate Mg(2+): Asp115 and Glu118. Residue Glu118 is part of the active site. Residues 156–226 form the DRBM domain; sequence DAKTLLQEYL…AAQVLELLNQ (71 aa).

The protein belongs to the ribonuclease III family. In terms of assembly, homodimer. Mg(2+) serves as cofactor.

The protein localises to the cytoplasm. It carries out the reaction Endonucleolytic cleavage to 5'-phosphomonoester.. Functionally, digests double-stranded RNA. Involved in the processing of primary rRNA transcript to yield the immediate precursors to the large and small rRNAs (23S and 16S). Processes some mRNAs, and tRNAs when they are encoded in the rRNA operon. Processes pre-crRNA and tracrRNA of type II CRISPR loci if present in the organism. This Shewanella amazonensis (strain ATCC BAA-1098 / SB2B) protein is Ribonuclease 3.